The chain runs to 273 residues: HTH-type transcriptional activator RhaS (273 aa).

Residues 174–272 enclose the HTH araC/xylS-type domain; sequence YQLLDWLQNN…SQSPRDLRSQ (99 aa). 2 DNA-binding regions (H-T-H motif) span residues 191–212 and 239–262; these read PELA…KNKT and VTDI…KREF.

As to quaternary structure, binds DNA as a dimer.

The protein localises to the cytoplasm. Functionally, activates expression of the rhaBAD and rhaT operons. The protein is HTH-type transcriptional activator RhaS of Yersinia pestis bv. Antiqua (strain Angola).